The following is a 66-amino-acid chain: Photosystem II reaction center protein J (66 aa).

Residues leucine 37–tyrosine 57 form a helical membrane-spanning segment.

The protein belongs to the PsbJ family. PSII is composed of 1 copy each of membrane proteins PsbA, PsbB, PsbC, PsbD, PsbE, PsbF, PsbH, PsbI, PsbJ, PsbK, PsbL, PsbM, PsbT, PsbX, PsbY, PsbZ, Psb30/Ycf12, peripheral proteins PsbO, CyanoQ (PsbQ), PsbU, PsbV and a large number of cofactors. It forms dimeric complexes.

The protein localises to the cellular thylakoid membrane. In terms of biological role, one of the components of the core complex of photosystem II (PSII). PSII is a light-driven water:plastoquinone oxidoreductase that uses light energy to abstract electrons from H(2)O, generating O(2) and a proton gradient subsequently used for ATP formation. It consists of a core antenna complex that captures photons, and an electron transfer chain that converts photonic excitation into a charge separation. The chain is Photosystem II reaction center protein J from Synechococcus sp. (strain CC9311).